Reading from the N-terminus, the 304-residue chain is tRNA-uridine aminocarboxypropyltransferase 1 (304 aa).

Serine 2 is modified (N-acetylserine). Positions 206-209 (DSTW) match the DXTW motif.

Belongs to the TDD superfamily. DTWD1 family.

It localises to the nucleus. The catalysed reaction is a uridine in tRNA + S-adenosyl-L-methionine = a 3-[(3S)-3-amino-3-carboxypropyl]uridine in tRNA + S-methyl-5'-thioadenosine + H(+). In terms of biological role, catalyzes the formation of 3-(3-amino-3-carboxypropyl)uridine (acp3U) at position 20 in the D-loop of several cytoplasmic tRNAs (acp3U(20)). The chain is tRNA-uridine aminocarboxypropyltransferase 1 from Homo sapiens (Human).